Reading from the N-terminus, the 513-residue chain is Maturase K (513 aa).

This sequence belongs to the intron maturase 2 family. MatK subfamily.

Its subcellular location is the plastid. It is found in the chloroplast. Its function is as follows. Usually encoded in the trnK tRNA gene intron. Probably assists in splicing its own and other chloroplast group II introns. The sequence is that of Maturase K from Sporobolus michauxianus (Prairie cordgrass).